The following is an 89-amino-acid chain: Large ribosomal subunit protein bL31B (89 aa).

The protein belongs to the bacterial ribosomal protein bL31 family. Type B subfamily. In terms of assembly, part of the 50S ribosomal subunit.

This Corynebacterium aurimucosum (strain ATCC 700975 / DSM 44827 / CIP 107346 / CN-1) (Corynebacterium nigricans) protein is Large ribosomal subunit protein bL31B.